The primary structure comprises 539 residues: Prolyl 4-hydroxylase subunit alpha-2 (539 aa).

Positions 1-16 are cleaved as a signal peptide; that stretch reads MRAVLLVCLLAGLAHA. N-linked (GlcNAc...) asparagine glycosylation occurs at asparagine 110. One can recognise a Fe2OG dioxygenase domain in the interval 401-509; the sequence is TSEELQVANY…KWVSNKWIHE (109 aa). Residues histidine 419, aspartate 421, and histidine 490 each contribute to the Fe cation site. Lysine 500 contributes to the 2-oxoglutarate binding site.

This sequence belongs to the P4HA family. As to quaternary structure, heterotetramer of two alpha chains and two beta chains. Exist either as a phy-2(2)/pdi-2(2) tetramer or as a phy-1/phy-2/pdi-2(2) tetramer. Requires Fe(2+) as cofactor. L-ascorbate is required as a cofactor.

It is found in the endoplasmic reticulum lumen. It catalyses the reaction L-prolyl-[collagen] + 2-oxoglutarate + O2 = trans-4-hydroxy-L-prolyl-[collagen] + succinate + CO2. Functionally, catalyzes the post-translational formation of 4-hydroxyproline in -Xaa-Pro-Gly- sequences in collagens and other proteins. The protein is Prolyl 4-hydroxylase subunit alpha-2 (phy-2) of Caenorhabditis elegans.